The chain runs to 1332 residues: MDLEFAVNGERFKIDSVDPSTTLLEFLRLNTPFKSVKLGCGEGGCGACLVVLSKYDPELDQVKECCINSCLTLLCSVNGCSITTSEGLGNTKKGFHPIHKRFAGFHASQCGFCTPGMCISLYSSLANAENNSSKDFTVSEAEKSVSGNLCRCTGYRPIVDACKSFASDVDIEDLGLNSFWKKGESKEVMFKNLPPYNPKDHLVTFPEFLKKKEKVDNGSDHLKYRWTTPFSVAELHNIMEAANSGDSLKLVVGNTGTGYYKDEERFDRYIDISNIPEMSMIKKDEKGIEIGAAVTISNAIDALEKESKSSYVFKKMATHMEKIGNRSIRNSGSIGGNLVMAQSRKFPSDVTTLLLAVDASVYMLNGRKTEKVTLQEFLELSPVLDSKRVLLKVEIPSWTAPSGDDTEFLFESYRAAPRSIGNALPYLNAAFLALVSRQEASRKGVTVEKCFLAFGSYGGDHSIRAIEVETFLTGKLLSYSVLYEAVGLLKGIIVPGKDTLHSEYRKSLAVGYLFEFFYPLIESGHRICSLDSGNKHNNSHVDTVKSLPFLSSSQQVLESNEFKPIGEAVIKVGAALQASGEAVFVDDIPTLPDCLHGAFIYSTEPLAKIKSLSFRENVTPTGVFAVLTFKDIPQQGQNIGSKTLFGPGPLFADELTRCAGQRIALVVADTQKHADMAAKLAVVEYDTKNLEQPILTVEDAVKRSSFFEVHPMFYPEPVGDVIKGMEEAERKIISSELRLGSQYFFYMEPQTALALPDEDNCVKVFSSSQAPEYVHSVIATCLGIQEHNVRVITRRVGGGFGGKAVKSMPVATACALGAYKLQRPVKMFLNRKTDMIMAGGRHPMKINYNVGFRSDGKLTALELTMLIDAGLEPDVSPIMPRNIMGPLRKYDWGALSFDVKVCKTNCLSRTAMRAPGEVQGSYIAESIIENVASSLQMDVDAVRKINLHTYDSLRKFYNHIAGDPDEYTLPLLWEKLEISSKFKERSEMVKEFNLCNVWRKRGISRVPIVHQVMQRPTPGKVSILSDGSVVVEVGGIEIGQGLWTKVQQMVAYGLGMVKCEGNEKLLDRIRVVQSDTLGMIQGGFTAGSTTSESSCEAVRLCCVILVERLKPIMDQMMMEKSGSVTWNILIQQAYGQYINLSASTLYKPEYSSMEYLNYGVGVSEVEVDLVTGKTEILRSDIIYDCGKSLNPAVDLGQTEGAFVQGIGFFMMEEYTTDEKGLVVQQGTWDYKIPTVDTIPKHFNVEIVNTGHHKNRVLSSKASGEPPLLLAASVHCATRSAIREARKHSLSSNFIDGSDSEFELPVPATMPVVKSLCGLYSVEKYLQGKIKGQ.

Residues 1–88 enclose the 2Fe-2S ferredoxin-type domain; the sequence is MDLEFAVNGE…GCSITTSEGL (88 aa). The [2Fe-2S] cluster site is built by cysteine 40, cysteine 45, and cysteine 48. In terms of domain architecture, FAD-binding PCMH-type spans 219–400; the sequence is SDHLKYRWTT…LKVEIPSWTA (182 aa).

Belongs to the xanthine dehydrogenase family. In terms of assembly, aldehyde oxidases (AO) are homodimers and heterodimers of AO subunits. AO-delta is a AAO3 homodimer. AAO3 also forms a dimer with AAO2. Interacts with PUB44, and this interaction probably results in targeting of this protein to the proteasome. The cofactor is [2Fe-2S] cluster. It depends on FAD as a cofactor. Mo-molybdopterin serves as cofactor. As to expression, expressed in vascular tissues of all organs, particularly in phloem companion cells and xylem parenchymatic cells. Highly expressed in roots and rosettes, and to lower extent in seedlings, stems and flowers. Expressed at very low levels in siliques and dry seeds. Also detected in root dividing cells (tips and primordia), in mesophyll cells and inside the guard cells.

It localises to the cytoplasm. The enzyme catalyses 2-cis-(+)-abscisic aldehyde + O2 + H2O = 2-cis-(+)-abscisate + H2O2 + H(+). It catalyses the reaction 1-naphthaldehyde + O2 + H2O = 1-naphthoate + H2O2 + H(+). It carries out the reaction indole-3-acetaldehyde + O2 + H2O = (indol-3-yl)acetate + H2O2 + H(+). In higher plants aldehyde oxidases (AO) appear to be homo- and heterodimeric assemblies of AO subunits with probably different physiological functions. AO-delta may be involved in the last step of abscisic acid biosynthesis, at least in leaves and seeds. In vitro, AO-delta oxidizes abscisic aldehyde to abscisic acid (ABA). In vitro, AO-delta also uses 1-naphthaldehyde, indole-3-aldehyde (IAld), benzaldehyde and cinnamaldehyde as substrate; the AAO2-AAO3 dimer also uses abscisic aldehyde as substrate. The polypeptide is Abscisic-aldehyde oxidase (AAO3) (Arabidopsis thaliana (Mouse-ear cress)).